Here is a 307-residue protein sequence, read N- to C-terminus: Putative S-adenosyl-L-methionine-dependent methyltransferase MUL_4430 (307 aa).

S-adenosyl-L-methionine is bound by residues Asp128 and Asp157–Leu158.

This sequence belongs to the UPF0677 family.

Its function is as follows. Exhibits S-adenosyl-L-methionine-dependent methyltransferase activity. In Mycobacterium ulcerans (strain Agy99), this protein is Putative S-adenosyl-L-methionine-dependent methyltransferase MUL_4430.